Here is a 309-residue protein sequence, read N- to C-terminus: Glutaminase (309 aa).

Residues Ser-64, Asn-114, Glu-160, Asn-167, Tyr-191, Tyr-243, and Val-261 each contribute to the substrate site.

The protein belongs to the glutaminase family. Homotetramer.

The enzyme catalyses L-glutamine + H2O = L-glutamate + NH4(+). The polypeptide is Glutaminase (Agrobacterium fabrum (strain C58 / ATCC 33970) (Agrobacterium tumefaciens (strain C58))).